A 166-amino-acid polypeptide reads, in one-letter code: Nucleotide-binding protein CV_2047 (166 aa).

It belongs to the YajQ family.

Nucleotide-binding protein. This Chromobacterium violaceum (strain ATCC 12472 / DSM 30191 / JCM 1249 / CCUG 213 / NBRC 12614 / NCIMB 9131 / NCTC 9757 / MK) protein is Nucleotide-binding protein CV_2047.